Consider the following 64-residue polypeptide: Putative antitoxin VapB1 (64 aa).

Possibly the antitoxin component of a type II toxin-antitoxin (TA) system. Its cognate toxin is VapC1 (Potential). This Methanocaldococcus jannaschii (strain ATCC 43067 / DSM 2661 / JAL-1 / JCM 10045 / NBRC 100440) (Methanococcus jannaschii) protein is Putative antitoxin VapB1 (vapB1).